We begin with the raw amino-acid sequence, 221 residues long: MDDATNKKRKVFVSTILTFWNTDRRDFPWRHTRDPYVILITEILLRRTTAGHVKKIYDKFFVKYKCFEDILKTPKSEIAKDIKEIGLSNQRAEQLKELARVVINDYGGRVPRNRKAILDLPGVGKYTCAAVMCLAFGKKAAMVDANFVRVINRYFGGSYENLNYNHKALWELAETLVPGGKCRDFNLGLMDFSAIICAPRKPKCEKCGMSKLCSYYEKCST.

The HhH domain maps to 105-133 (DYGGRVPRNRKAILDLPGVGKYTCAAVMC). [4Fe-4S] cluster contacts are provided by Cys-197, Cys-204, Cys-207, and Cys-213.

It belongs to the Nth/MutY family. Requires [4Fe-4S] cluster as cofactor.

The catalysed reaction is Hydrolyzes mismatched double-stranded DNA and polynucleotides, releasing free thymine.. In terms of biological role, DNA glycosylase that excises thymine from T/G mismatches and uracil from U/G mismatches. Acts as a repair enzyme able to counteract the mutagenic effect of spontaneous hydrolytic deamination of DNA 5-methylcytosine (5-meC) residues that leads to the formation of T/G mismatches. May also repair U/G mismatches arising from hydrolytic deamination of DNA cytosine residues. G/G, A/G, T/C and U/C are minor substrates. This chain is Thymine/uracil-DNA glycosylase, found in Methanothermobacter thermautotrophicus (Methanobacterium thermoformicicum).